A 1823-amino-acid chain; its full sequence is Laminin subunit alpha-4 (1823 aa).

The first 24 residues, 1–24 (MALSSAWRSVLPLWLLWSAACSRA), serve as a signal peptide directing secretion. Residue S39 is glycosylated (O-linked (Xyl...) (chondroitin sulfate) serine). Disulfide bonds link C82–C91, C84–C98, C101–C110, C113–C129, C132–C146, C134–C155, C157–C166, C169–C184, C187–C202, C189–C209, C212–C221, and C224–C238. 3 consecutive Laminin EGF-like domains span residues 82-131 (CDCN…FCQP), 132-186 (CPCP…TCKK), and 187-240 (CDCS…NCAV). An N-linked (GlcNAc...) asparagine glycan is attached at N104. N215 carries an N-linked (GlcNAc...) asparagine glycan. One can recognise a Laminin EGF-like 4; truncated domain in the interval 241–255 (CNCGGGPCDSVTGEC). The tract at residues 256–832 (LEEGFEPPTG…AQTRSVASKI (577 aa)) is domain II and I. N315 is a glycosylation site (N-linked (GlcNAc...) asparagine). Residues 320–403 (LLKTKLSERE…KIQEINNKML (84 aa)) adopt a coiled-coil conformation. N-linked (GlcNAc...) asparagine glycosylation occurs at N465. Residues 473-528 (VVLEQLDDYNAKLSDLQEALDQALNYVRDAEDMNRATAARQRDHEKQQERVREQME) are a coiled coil. N531, N557, N578, N581, N638, and N646 each carry an N-linked (GlcNAc...) asparagine glycan. Residues 581-614 (NLSHDLVQEAIDHAQDLQQEANELSRKLHSSDMN) adopt a coiled-coil conformation. Residues 662–724 (IIYHKDESEN…AVKQLQAAER (63 aa)) adopt a coiled-coil conformation. Positions 724–726 (RGD) match the Cell attachment site motif. Residues N742, N758, N761, N787, and N810 are each glycosylated (N-linked (GlcNAc...) asparagine). Positions 777 to 806 (AVNSARDAVRNLTEVVPQLLDQLRTVEQKR) form a coiled coil. Laminin G-like domains follow at residues 833-1035 (QVSM…SVPC), 1047-1227 (AASY…GYGC), and 1234-1402 (SRRA…LYEC). C1005 and C1035 are oxidised to a cystine. The N-linked (GlcNAc...) asparagine glycan is linked to N1093. A disulfide bridge connects residues C1201 and C1227. N-linked (GlcNAc...) asparagine glycans are attached at residues N1288 and N1366. C1370 and C1402 are disulfide-bonded. N1418 is a glycosylation site (N-linked (GlcNAc...) asparagine). The disordered stretch occupies residues 1419–1440 (LSKPKASQNKKGGKSKDAPSWD). Laminin G-like domains lie at 1469-1640 (AYQY…VTPC) and 1647-1820 (TGTY…INSC). 2 disulfides stabilise this stretch: C1617/C1640 and C1792/C1820.

As to quaternary structure, laminin is a complex glycoprotein, consisting of three different polypeptide chains (alpha, beta, gamma), which are bound to each other by disulfide bonds into a cross-shaped molecule comprising one long and three short arms with globules at each end. Alpha-4 is a subunit of laminin-8 (laminin-411), laminin-9 (laminin-421) and laminin-14 (laminin-423). Detected in placenta (at protein level). Detected in fibroblasts and urine (at protein level). In adult, strong expression in heart, lung, ovary small and large intestines, placenta, liver; weak or no expression in skeletal muscle, kidney, pancreas, testis, prostate, brain. High expression in fetal lung and kidney. Expression in fetal and newborn tissues is observed in certain mesenchymal cells in tissues such as smooth muscle and dermis.

It is found in the secreted. It localises to the extracellular space. Its subcellular location is the extracellular matrix. The protein resides in the basement membrane. Its function is as follows. Binding to cells via a high affinity receptor, laminin is thought to mediate the attachment, migration and organization of cells into tissues during embryonic development by interacting with other extracellular matrix components. In Homo sapiens (Human), this protein is Laminin subunit alpha-4 (LAMA4).